We begin with the raw amino-acid sequence, 418 residues long: Methionine aminopeptidase 2 (418 aa).

Residues Val-18–Gly-49 are disordered. Residues Lys-38 to Gly-49 are compositionally biased toward basic residues. His-172 provides a ligand contact to substrate. A divalent metal cation is bound by residues Asp-192, Asp-203, and His-272. His-280 contacts substrate. 2 residues coordinate a divalent metal cation: Glu-305 and Glu-399.

It belongs to the peptidase M24A family. Methionine aminopeptidase eukaryotic type 2 subfamily. Requires Co(2+) as cofactor. The cofactor is Zn(2+). It depends on Mn(2+) as a cofactor. Fe(2+) serves as cofactor.

Its subcellular location is the cytoplasm. The enzyme catalyses Release of N-terminal amino acids, preferentially methionine, from peptides and arylamides.. Functionally, cotranslationally removes the N-terminal methionine from nascent proteins. The N-terminal methionine is often cleaved when the second residue in the primary sequence is small and uncharged (Met-Ala-, Cys, Gly, Pro, Ser, Thr, or Val). This is Methionine aminopeptidase 2 from Kluyveromyces lactis (strain ATCC 8585 / CBS 2359 / DSM 70799 / NBRC 1267 / NRRL Y-1140 / WM37) (Yeast).